We begin with the raw amino-acid sequence, 108 residues long: Nucleoid-associated protein Bmul_1447/BMULJ_01796 (108 aa).

The tract at residues 84–108 is disordered; sequence EATSQEKMSGMTSGLPLPPGFKLPF. Polar residues predominate over residues 85–95; that stretch reads ATSQEKMSGMT. The segment covering 99–108 has biased composition (pro residues); it reads PLPPGFKLPF.

It belongs to the YbaB/EbfC family. Homodimer.

The protein localises to the cytoplasm. The protein resides in the nucleoid. In terms of biological role, binds to DNA and alters its conformation. May be involved in regulation of gene expression, nucleoid organization and DNA protection. This Burkholderia multivorans (strain ATCC 17616 / 249) protein is Nucleoid-associated protein Bmul_1447/BMULJ_01796.